The primary structure comprises 229 residues: MKSIRQLLSLAKKEKKREKKSNHGSHSMEWESPPSYNEIKSPSAPIFGYDYEDMEYLPTLGVQTLKLQYKCVLQVRSESPFTSYLDAVDNVANWEKQYNGFSGKKPFYRAVMVRAVQAMKANPMSLQDGRSPEYTSEIEGRCLVFHSLGHIPPMMYMCEQFTRDWSGRRNQGIVNVKIWVGVTDTLDNLDQIFDPKKHFSEEEMLSAATILGLEVKKSSDNNYIISKSY.

A dynamin binding motif is present at residues 2 to 4 (KSI). The tract at residues 11-36 (AKKEKKREKKSNHGSHSMEWESPPSY) is disordered. Residues 13–23 (KEKKREKKSNH) show a composition bias toward basic residues. The short motif at 33–36 (PPSY) is the PPXY motif element. A PTAP/PSAP motif motif is present at residues 42–45 (PSAP).

Belongs to the vesiculoviruses matrix protein family. Homomultimer. Interacts with viral nucleocapsid; this interaction contributes to the virion assembly. Interacts with the viral envelope glycoprotein; this interaction contributes to the virion assembly. Interacts with host RAE1-NUP98 complex. Interacts with host NEDD4 and TSG101. Interacts with host dynamin. Interacts with host NDUFAF4; the interaction inhibits viral propagation and is independent of interferon activation. Interacts with host GTF2H5; the interaction may inhibit host transcription. In terms of processing, phosphorylated by host.

It localises to the virion. Its subcellular location is the host endomembrane system. The protein localises to the host nucleus membrane. It is found in the host nucleus. The protein resides in the host cytoplasm. In terms of biological role, forms a double layer around the helical nucleocapsid, the inner matrix layer binding to the N helix and the outer matrix layer binding to the envelope glycoprotein. Plays a major role in assembly and budding of virion, by recruiting cellular partners of the ESCRT complexes that play a key role in releasing the budding particle from the host membrane. Condensates the ribonucleocapsid core during virus assembly. Inhibits the host mRNA nuclear export thereby inducing the shut off of cellular transcription and preventing the interferon signaling and the establishment of antiviral state in infected cells. This shutoff presumably inhibits interferon signaling and thus establishment of antiviral state in virus infected cells. Induces cell-rounding, cytoskeleton disorganization and apoptosis in infected cell. Inhibits host transcription, possibly through interaction with host DNA repair factor IIH/TFIIH GTF2H5 subunit. This Piry virus (PIRYV) protein is Matrix protein (M).